Reading from the N-terminus, the 336-residue chain is Cell division protein ZipA (336 aa).

The Periplasmic portion of the chain corresponds to 1–6; that stretch reads MMQDLR. A helical transmembrane segment spans residues 7–27; it reads LILIVVGAIAIIALLLHGLWT. Over 28–336 the chain is Cytoplasmic; it reads SRKERSSLFR…RIRDVLKANA (309 aa). Basic and acidic residues predominate over residues 40 to 51; that stretch reads PVKRAKKARDET. Residues 40-190 form a disordered region; that stretch reads PVKRAKKARD…APAQPQQPAE (151 aa). Low complexity predominate over residues 76–89; it reads SFSSSSFDNASFDN. Positions 126–138 are enriched in polar residues; that stretch reads PRSQVRGDSNPQV. Low complexity predominate over residues 179–190; sequence QPAPAQPQQPAE.

The protein belongs to the ZipA family. Interacts with FtsZ via their C-terminal domains.

It localises to the cell inner membrane. Essential cell division protein that stabilizes the FtsZ protofilaments by cross-linking them and that serves as a cytoplasmic membrane anchor for the Z ring. Also required for the recruitment to the septal ring of downstream cell division proteins. The protein is Cell division protein ZipA of Pectobacterium carotovorum subsp. carotovorum (strain PC1).